A 415-amino-acid polypeptide reads, in one-letter code: MSHKSAEMYELKKKVEELKSYRGRATELVSLYIPAGYDINKVMQQLREEYGTAQNIKSKSTRKNVLGALERAMQHLKLYRKTPENGLALFVGNVSEQEGVSDIKLWAIVPPEPLKVRLYRCDQTFVTEPLEEMLRVKDAYGLITVEKNEATIGLLRGKRIEVIDDLTSNVPGKTRAGGQSARRYERIREQETHEFMKRIAEHAAKAFLPLLEKGELKGIIIGGPGPTKEEFVDGDYLHHELRKKVIGVVDISYHGEYGLRELVEKASDILSEHEAVKERKLIQDFFRHLVKDTGLITYGEREVRKALELGAVDTLLISEGYDKVRVKAKCNACGWEELKTMSEQEFHVYKKKLTHCPKCGSQNISFEKWDVAEELIKLAEESGAEVEIISLDTEEGQQFYKAFGGLGAFLRYKIQ.

The protein belongs to the eukaryotic release factor 1 family. In terms of assembly, heterodimer of two subunits, one of which binds GTP.

The protein resides in the cytoplasm. Its function is as follows. Directs the termination of nascent peptide synthesis (translation) in response to the termination codons UAA, UAG and UGA. The sequence is that of Peptide chain release factor subunit 1 from Thermococcus onnurineus (strain NA1).